We begin with the raw amino-acid sequence, 440 residues long: Cysteine proteinase (440 aa).

Positions 1–60 are cleaved as a signal peptide; that stretch reads MYSSSVVSNPNERLVNNRVENDLESSDDTLSTQAKPVSRLLTRKLLLGVVVLFFLAGVSV. The propeptide at 61–229 is activation peptide; that stretch reads VSYFLFSKYK…DEDVDLAKLT (169 aa). Residues 166–182 form an involved in processing to yield active enzymes region; that stretch reads VKGINRFSDLTEREFYK. Residue Asn-206 is glycosylated (N-linked (GlcNAc...) asparagine). The cysteines at positions 250 and 291 are disulfide-linked. Residues Cys-253, His-382, and Asn-404 contribute to the active site.

This sequence belongs to the peptidase C1 family.

The chain is Cysteine proteinase from Theileria parva (East coast fever infection agent).